Here is a 723-residue protein sequence, read N- to C-terminus: Zinc finger protein 750 (723 aa).

The CCHC-type zinc finger occupies 25 to 51 (YKCFQCPFTCNEKSHLFNHMKYGLCKN). Zn(2+)-binding residues include C27, C30, H43, and C49. Disordered stretches follow at residues 64–91 (KCPK…SKSV), 132–153 (LHRA…QPAL), 359–427 (ASSP…SQTC), 466–630 (PAQA…SEEQ), and 650–723 (RVGD…ARVS). Residues 67-91 (KSNSLDPKQTNQPDATAKPASSKSV) show a composition bias toward polar residues. Residues 360–369 (SSPSRLNPSD) show a composition bias toward polar residues. The segment covering 370 to 397 (PNRKHVEFESPIPEAKDSSKAGQRDTEG) has biased composition (basic and acidic residues). Positions 470-482 (AETTAESPVSLNV) are enriched in polar residues. The span at 500–509 (AAPSSPDDSS) shows a compositional bias: low complexity. Positions 530-545 (PTYQGSPQAETASFSE) are enriched in polar residues. Composition is skewed to low complexity over residues 563-582 (APRP…AAVP) and 606-616 (GDGAPPTGPGE). Over residues 666-678 (DTPTLSSMESQEA) the composition is skewed to polar residues.

As to expression, expressed in the skin, prostate, lung, placenta and thymus, and at low level in T-cells. Not expressed in peripheral blood leukocytes, pancreas and brain. Clearly expressed in primary keratinocytes but not in fibroblasts.

It is found in the nucleus. Functionally, transcription factor involved in epidermis differentiation. Required for terminal epidermal differentiation: acts downstream of p63/TP63 and activates expression of late epidermal differentiation genes. Specifically binds to the promoter of KLF4 and promotes its expression. The chain is Zinc finger protein 750 (ZNF750) from Homo sapiens (Human).